The sequence spans 266 residues: Phosphatidate cytidylyltransferase (266 aa).

The next 8 helical transmembrane spans lie at 16 to 36, 52 to 72, 78 to 98, 101 to 121, 125 to 145, 164 to 184, 186 to 206, and 237 to 257; these read VVLIVVAGLILYADNLLLFWA, LFQVKASFSLYLILVLSWVAA, PVECALISAMVMASVIAYQKA, SEAILPFLYPGVGFFALFGVY, GAVAIIWLLVVVVASDVGAFF, LEGALIGVVLASVLGSFVGMG, LSGGFLMALLFSFLIALMAVF, and LDSMLFGALSLHVLLYFLEIW.

It belongs to the CDS family.

The protein resides in the cell inner membrane. It catalyses the reaction a 1,2-diacyl-sn-glycero-3-phosphate + CTP + H(+) = a CDP-1,2-diacyl-sn-glycerol + diphosphate. It participates in phospholipid metabolism; CDP-diacylglycerol biosynthesis; CDP-diacylglycerol from sn-glycerol 3-phosphate: step 3/3. This is Phosphatidate cytidylyltransferase (cdsA) from Helicobacter pylori (strain J99 / ATCC 700824) (Campylobacter pylori J99).